A 235-amino-acid chain; its full sequence is Large ribosomal subunit protein uL1 (235 aa).

Belongs to the universal ribosomal protein uL1 family. Part of the 50S ribosomal subunit.

Its function is as follows. Binds directly to 23S rRNA. The L1 stalk is quite mobile in the ribosome, and is involved in E site tRNA release. Protein L1 is also a translational repressor protein, it controls the translation of the L11 operon by binding to its mRNA. This is Large ribosomal subunit protein uL1 from Prochlorococcus marinus subsp. pastoris (strain CCMP1986 / NIES-2087 / MED4).